Consider the following 294-residue polypeptide: Nucleotide-binding protein CLB_3433 (294 aa).

8–15 lines the ATP pocket; it reads GLSGAGKT. 59–62 provides a ligand contact to GTP; that stretch reads DIRG.

Belongs to the RapZ-like family.

In terms of biological role, displays ATPase and GTPase activities. The sequence is that of Nucleotide-binding protein CLB_3433 from Clostridium botulinum (strain ATCC 19397 / Type A).